The chain runs to 455 residues: Bifunctional protein GlmU (455 aa).

The tract at residues 1 to 226 (MSLDIVILAA…AMEVQGANDR (226 aa)) is pyrophosphorylase. UDP-N-acetyl-alpha-D-glucosamine-binding positions include 8–11 (LAAG), lysine 22, glutamine 73, 78–79 (GT), 99–101 (YGD), glycine 136, glutamate 151, asparagine 166, and asparagine 224. Aspartate 101 contributes to the Mg(2+) binding site. A Mg(2+)-binding site is contributed by asparagine 224. Positions 227–247 (KQLSELERHYQLREARRLMAA) are linker. Residues 248-455 (GVTLRDPSRF…WKRPVKITKD (208 aa)) form an N-acetyltransferase region. The UDP-N-acetyl-alpha-D-glucosamine site is built by arginine 330 and lysine 348. Histidine 360 functions as the Proton acceptor in the catalytic mechanism. 2 residues coordinate UDP-N-acetyl-alpha-D-glucosamine: tyrosine 363 and asparagine 374. Acetyl-CoA-binding positions include alanine 377, 383-384 (NY), serine 402, alanine 420, and arginine 437.

It in the N-terminal section; belongs to the N-acetylglucosamine-1-phosphate uridyltransferase family. In the C-terminal section; belongs to the transferase hexapeptide repeat family. Homotrimer. The cofactor is Mg(2+).

The protein localises to the cytoplasm. It catalyses the reaction alpha-D-glucosamine 1-phosphate + acetyl-CoA = N-acetyl-alpha-D-glucosamine 1-phosphate + CoA + H(+). The enzyme catalyses N-acetyl-alpha-D-glucosamine 1-phosphate + UTP + H(+) = UDP-N-acetyl-alpha-D-glucosamine + diphosphate. Its pathway is nucleotide-sugar biosynthesis; UDP-N-acetyl-alpha-D-glucosamine biosynthesis; N-acetyl-alpha-D-glucosamine 1-phosphate from alpha-D-glucosamine 6-phosphate (route II): step 2/2. It functions in the pathway nucleotide-sugar biosynthesis; UDP-N-acetyl-alpha-D-glucosamine biosynthesis; UDP-N-acetyl-alpha-D-glucosamine from N-acetyl-alpha-D-glucosamine 1-phosphate: step 1/1. The protein operates within bacterial outer membrane biogenesis; LPS lipid A biosynthesis. In terms of biological role, catalyzes the last two sequential reactions in the de novo biosynthetic pathway for UDP-N-acetylglucosamine (UDP-GlcNAc). The C-terminal domain catalyzes the transfer of acetyl group from acetyl coenzyme A to glucosamine-1-phosphate (GlcN-1-P) to produce N-acetylglucosamine-1-phosphate (GlcNAc-1-P), which is converted into UDP-GlcNAc by the transfer of uridine 5-monophosphate (from uridine 5-triphosphate), a reaction catalyzed by the N-terminal domain. The protein is Bifunctional protein GlmU of Pseudomonas syringae pv. tomato (strain ATCC BAA-871 / DC3000).